We begin with the raw amino-acid sequence, 458 residues long: Cysteine--tRNA ligase (458 aa).

Cysteine 28 serves as a coordination point for Zn(2+). The short motif at 30-40 (VTVYDLCHFGH) is the 'HIGH' region element. 3 residues coordinate Zn(2+): cysteine 209, histidine 234, and glutamate 238. The 'KMSKS' region motif lies at 266–270 (KMSKS). Lysine 269 contacts ATP.

Belongs to the class-I aminoacyl-tRNA synthetase family. Monomer. The cofactor is Zn(2+).

It is found in the cytoplasm. It carries out the reaction tRNA(Cys) + L-cysteine + ATP = L-cysteinyl-tRNA(Cys) + AMP + diphosphate. This Mannheimia succiniciproducens (strain KCTC 0769BP / MBEL55E) protein is Cysteine--tRNA ligase.